The sequence spans 227 residues: 7-cyano-7-deazaguanine synthase (227 aa).

Residue 8 to 18 (LSGGLDSATVL) participates in ATP binding. Residues cysteine 191, cysteine 201, cysteine 204, and cysteine 207 each coordinate Zn(2+).

This sequence belongs to the QueC family. Requires Zn(2+) as cofactor.

It carries out the reaction 7-carboxy-7-deazaguanine + NH4(+) + ATP = 7-cyano-7-deazaguanine + ADP + phosphate + H2O + H(+). It functions in the pathway purine metabolism; 7-cyano-7-deazaguanine biosynthesis. In terms of biological role, catalyzes the ATP-dependent conversion of 7-carboxy-7-deazaguanine (CDG) to 7-cyano-7-deazaguanine (preQ(0)). The chain is 7-cyano-7-deazaguanine synthase from Paramagnetospirillum magneticum (strain ATCC 700264 / AMB-1) (Magnetospirillum magneticum).